A 700-amino-acid polypeptide reads, in one-letter code: Putative glutamine-dependent NAD(+) synthetase (700 aa).

In terms of domain architecture, CN hydrolase spans 5–275 (VTIASCQLNQ…VEVISATVDV (271 aa)). The Proton acceptor; for glutaminase activity role is filled by Glu45. Catalysis depends on Lys114, which acts as the For glutaminase activity. The active-site Nucleophile; for glutaminase activity is the Cys175. A ligase region spans residues 327–700 (IPLPEEEITF…ASKFEQHQRK (374 aa)). 357-364 (PLSGGLDS) is a binding site for ATP. Ser359 is an active-site residue.

In the C-terminal section; belongs to the NAD synthetase family.

It carries out the reaction deamido-NAD(+) + L-glutamine + ATP + H2O = L-glutamate + AMP + diphosphate + NAD(+) + H(+). The protein operates within cofactor biosynthesis; NAD(+) biosynthesis; NAD(+) from deamido-NAD(+) (L-Gln route): step 1/1. This chain is Putative glutamine-dependent NAD(+) synthetase, found in Schizosaccharomyces pombe (strain 972 / ATCC 24843) (Fission yeast).